The sequence spans 320 residues: ADP/ATP translocase 4 (320 aa).

Topologically, residues methionine 1–serine 20 are mitochondrial intermembrane. The Solcar 1 repeat unit spans residues valine 19–leucine 111. The chain crosses the membrane as a helical span at residues phenylalanine 21–glutamine 50. Residues valine 51–asparagine 87 lie on the Mitochondrial matrix side of the membrane. Residues leucine 88–phenylalanine 112 traverse the membrane as a helical segment. The ADP site is built by arginine 93 and lysine 105. Residues methionine 113–phenylalanine 122 are Mitochondrial intermembrane-facing. Residues tryptophan 123 to valine 143 traverse the membrane as a helical segment. Solcar repeat units lie at residues arginine 124–leucine 214 and threonine 221–phenylalanine 308. Residues valine 144–glycine 191 lie on the Mitochondrial matrix side of the membrane. The helical transmembrane segment at valine 192–lysine 212 threads the bilayer. Topologically, residues glycine 213–phenylalanine 223 are mitochondrial intermembrane. The helical transmembrane segment at leucine 224 to phenylalanine 244 threads the bilayer. Topologically, residues aspartate 245–glycine 284 are mitochondrial matrix. Arginine 248 contacts ADP. An important for transport activity region spans residues arginine 248–methionine 253. Positions arginine 248–methionine 253 match the Nucleotide carrier signature motif motif. Residues alanine 285–tyrosine 302 traverse the membrane as a helical segment. Residues aspartate 303–aspartate 320 are Mitochondrial intermembrane-facing.

Belongs to the mitochondrial carrier (TC 2.A.29) family. Monomer. Specifically expressed in undifferentiated embryonic stem cells and germ cells. Expression is down-regulated after embryonic stem cells differentiation. In adults, only expressed in developing gametes in testis. In testis, expressed at higher level in spermatocytes. Expression is probably associated with entry of the male germ cells into meiosis. Expressed at very low level in Sertoli cells.

Its subcellular location is the mitochondrion inner membrane. It is found in the membrane. The protein resides in the cell projection. The protein localises to the cilium. It localises to the flagellum membrane. It carries out the reaction ADP(in) + ATP(out) = ADP(out) + ATP(in). The enzyme catalyses dATP(out) + ADP(in) = dATP(in) + ADP(out). It catalyses the reaction dADP(in) + ADP(out) = dADP(out) + ADP(in). The catalysed reaction is H(+)(in) = H(+)(out). Its activity is regulated as follows. The matrix-open state (m-state) is inhibited by the membrane-permeable bongkrekic acid (BKA). The cytoplasmic-open state (c-state) is inhibited by the membrane-impermeable toxic inhibitor carboxyatractyloside (CATR). Proton transporter activity is inhibited by ADP:ATP antiporter activity. In terms of biological role, ADP:ATP antiporter that mediates import of ADP into the mitochondrial matrix for ATP synthesis, and export of ATP out to fuel the cell. Cycles between the cytoplasmic-open state (c-state) and the matrix-open state (m-state): operates by the alternating access mechanism with a single substrate-binding site intermittently exposed to either the cytosolic (c-state) or matrix (m-state) side of the inner mitochondrial membrane. Specifically required during spermatogenesis, probably to mediate ADP:ATP exchange in spermatocytes. Large ATP supplies from mitochondria may be critical for normal progression of spermatogenesis during early stages of meiotic prophase I, including DNA double-strand break repair and chromosomal synapsis. In addition to its ADP:ATP antiporter activity, also involved in mitochondrial uncoupling and mitochondrial permeability transition pore (mPTP) activity. Plays a role in mitochondrial uncoupling by acting as a proton transporter: proton transport uncouples the proton flows via the electron transport chain and ATP synthase to reduce the efficiency of ATP production and cause mitochondrial thermogenesis. Proton transporter activity is inhibited by ADP:ATP antiporter activity, suggesting that SLC25A31/ANT4 acts as a master regulator of mitochondrial energy output by maintaining a delicate balance between ATP production (ADP:ATP antiporter activity) and thermogenesis (proton transporter activity). Proton transporter activity requires free fatty acids as cofactor, but does not transport it. Among nucleotides, may also exchange ADP for dATP and dADP. Also plays a key role in mPTP opening, a non-specific pore that enables free passage of the mitochondrial membranes to solutes of up to 1.5 kDa, and which contributes to cell death. It is however unclear if SLC25A31/ANT4 constitutes a pore-forming component of mPTP or regulates it. This is ADP/ATP translocase 4 from Mus musculus (Mouse).